Reading from the N-terminus, the 329-residue chain is MPRRPLLEFEKPLVELEQQIEQIRQLARDSEVDVSQQLQQLESLAARRRQEIFQGLTPAQKIQVARHPQRPSTLDFIQMFCDDWVELHGDRRGNDDQALIGGVGRVGNRAVMLIGHQKGRDTKENVARNFGMAAPGGYRKAMRLMDHADRFRLPILTFIDTPGAYAGLEAEEQGQGEAIAVNLREMFRLRVPVIATVIGEGGSGGALGIGVADRLLMFEHSVYTVASPEACASILWRDAAKAPDAAAALRITGRDLLELGVVDEVLEEPSGGNNWAPLEAGENLRAAIERHLEQLLSLSEQQLREARYSKFRAMGRFLEKTSQDVDKAA.

Positions 40–294 (QLESLAARRR…RAAIERHLEQ (255 aa)) constitute a CoA carboxyltransferase C-terminal domain.

The protein belongs to the AccA family. Acetyl-CoA carboxylase is a heterohexamer composed of biotin carboxyl carrier protein (AccB), biotin carboxylase (AccC) and two subunits each of ACCase subunit alpha (AccA) and ACCase subunit beta (AccD).

Its subcellular location is the cytoplasm. The enzyme catalyses N(6)-carboxybiotinyl-L-lysyl-[protein] + acetyl-CoA = N(6)-biotinyl-L-lysyl-[protein] + malonyl-CoA. The protein operates within lipid metabolism; malonyl-CoA biosynthesis; malonyl-CoA from acetyl-CoA: step 1/1. In terms of biological role, component of the acetyl coenzyme A carboxylase (ACC) complex. First, biotin carboxylase catalyzes the carboxylation of biotin on its carrier protein (BCCP) and then the CO(2) group is transferred by the carboxyltransferase to acetyl-CoA to form malonyl-CoA. This Synechococcus sp. (strain CC9605) protein is Acetyl-coenzyme A carboxylase carboxyl transferase subunit alpha.